The primary structure comprises 488 residues: Proline--tRNA ligase (488 aa).

Belongs to the class-II aminoacyl-tRNA synthetase family. ProS type 3 subfamily. In terms of assembly, homodimer.

It localises to the cytoplasm. The enzyme catalyses tRNA(Pro) + L-proline + ATP = L-prolyl-tRNA(Pro) + AMP + diphosphate. Catalyzes the attachment of proline to tRNA(Pro) in a two-step reaction: proline is first activated by ATP to form Pro-AMP and then transferred to the acceptor end of tRNA(Pro). The sequence is that of Proline--tRNA ligase from Pyrobaculum aerophilum (strain ATCC 51768 / DSM 7523 / JCM 9630 / CIP 104966 / NBRC 100827 / IM2).